Consider the following 127-residue polypeptide: Holo-[acyl-carrier-protein] synthase (127 aa).

2 residues coordinate Mg(2+): D9 and E58.

It belongs to the P-Pant transferase superfamily. AcpS family. It depends on Mg(2+) as a cofactor.

It localises to the cytoplasm. It catalyses the reaction apo-[ACP] + CoA = holo-[ACP] + adenosine 3',5'-bisphosphate + H(+). Its function is as follows. Transfers the 4'-phosphopantetheine moiety from coenzyme A to a Ser of acyl-carrier-protein. The sequence is that of Holo-[acyl-carrier-protein] synthase from Shewanella baltica (strain OS185).